The chain runs to 99 residues: Small ribosomal subunit protein uS19 (99 aa).

It belongs to the universal ribosomal protein uS19 family.

Protein S19 forms a complex with S13 that binds strongly to the 16S ribosomal RNA. In Sulfurihydrogenibium sp. (strain YO3AOP1), this protein is Small ribosomal subunit protein uS19.